A 367-amino-acid polypeptide reads, in one-letter code: Putrescine-binding periplasmic protein SpuD (367 aa).

Positions 1–24 (MMKRFGKTLLALTLAGSVAGMAQA) are cleaved as a signal peptide. Putrescine is bound at residue 36–37 (SD). Cys173 and Cys236 are oxidised to a cystine. Putrescine-binding residues include Asp244 and Asp275.

This sequence belongs to the bacterial solute-binding protein PotD/PotF family.

It is found in the periplasm. It localises to the secreted. Putrescine-binding protein probably required for putrescine uptake into cells. Binds putrescine with high affinity, spermidine with relatively low affinity. Does not bind cadaverine or spermine. Putrescine binding induces large inter-domain conformational changes. The polypeptide is Putrescine-binding periplasmic protein SpuD (spuD) (Pseudomonas aeruginosa (strain UCBPP-PA14)).